The following is a 144-amino-acid chain: Maximins 2/H8 type 2 (144 aa).

A signal peptide spans 1–18 (MNFKYIVAVSFLIASAYA). A propeptide spanning residues 19–43 (RSEENEIQSLSQRDVLEEESLREIR) is cleaved from the precursor. Position 70 is an asparagine amide (asparagine 70). A propeptide spanning residues 74–123 (TAEEHEVMKRLETVMRDLDSLDYPEEASERETRGFNQEEIANLFTKKEKR) is cleaved from the precursor. The residue at position 143 (isoleucine 143) is an Isoleucine amide.

The protein belongs to the bombinin family. In terms of tissue distribution, expressed by the skin glands.

The protein resides in the secreted. Its function is as follows. Maximin-2 shows antibacterial activity against both Gram-positive and Gram-negative bacteria. It also shows antimicrobial activity against the fungus C.albicans, but not against A.flavus nor P.uticale. It has little hemolytic activity. In terms of biological role, maximin-H8 shows antimicrobial activity against bacteria and against the fungus C.albicans. Shows strong hemolytic activity. The protein is Maximins 2/H8 type 2 of Bombina maxima (Giant fire-bellied toad).